Here is a 346-residue protein sequence, read N- to C-terminus: Tetraacyldisaccharide 4'-kinase (346 aa).

ATP is bound at residue 54–61 (TVGGAGKT).

Belongs to the LpxK family.

It carries out the reaction a lipid A disaccharide + ATP = a lipid IVA + ADP + H(+). The protein operates within glycolipid biosynthesis; lipid IV(A) biosynthesis; lipid IV(A) from (3R)-3-hydroxytetradecanoyl-[acyl-carrier-protein] and UDP-N-acetyl-alpha-D-glucosamine: step 6/6. Transfers the gamma-phosphate of ATP to the 4'-position of a tetraacyldisaccharide 1-phosphate intermediate (termed DS-1-P) to form tetraacyldisaccharide 1,4'-bis-phosphate (lipid IVA). This Sinorhizobium medicae (strain WSM419) (Ensifer medicae) protein is Tetraacyldisaccharide 4'-kinase.